Consider the following 248-residue polypeptide: Mannose-binding protein C (248 aa).

The N-terminal stretch at 1–20 (MSLIPSLSLLLMSMVAASYS) is a signal peptide. Residues 42–99 (GINGFPGKDGRDGTKGEKGEPGQGLRGLQGPPGKLGPPGNPGPSGSPGPKGQKGDPGK) form the Collagen-like domain. Residues 43 to 107 (INGFPGKDGR…GKSPDCDSSL (65 aa)) are disordered. Pro47 is subject to 4-hydroxyproline. A compositionally biased stretch (basic and acidic residues) spans 49–61 (KDGRDGTKGEKGE). 4-hydroxyproline is present on residues Pro73, Pro79, Pro82, and Pro88. Pro residues predominate over residues 75-87 (KLGPPGNPGPSGS). Basic and acidic residues predominate over residues 93–102 (QKGDPGKSPD). The stretch at 112-130 (RKALQTEMARIKKWLTFSL) forms a coiled coil. In terms of domain architecture, C-type lectin spans 134-245 (VGNKFFLTNG…CSSSHLAVCE (112 aa)). Disulfide bonds link Cys155/Cys244 and Cys222/Cys236.

In terms of assembly, oligomeric complex of 3 or more homotrimers. Interacts with MASP1 and MASP2. Interacts with MEP1A and MEP1B and may inhibit their catalytic activity. Hydroxylation on proline residues within the sequence motif, GXPG, is most likely to be 4-hydroxy as this fits the requirement for 4-hydroxylation in vertebrates.

The protein localises to the secreted. Its function is as follows. Calcium-dependent lectin involved in innate immune defense. Binds mannose, fucose and N-acetylglucosamine on different microorganisms and activates the lectin complement pathway. Binds to late apoptotic cells, as well as to apoptotic blebs and to necrotic cells, but not to early apoptotic cells, facilitating their uptake by macrophages. The chain is Mannose-binding protein C (MBL2) from Hylobates lar (Lar gibbon).